A 375-amino-acid chain; its full sequence is Cell division protein ZapE (375 aa).

78–85 (GGVGRGKT) is a binding site for ATP.

This sequence belongs to the AFG1 ATPase family. ZapE subfamily. Interacts with FtsZ.

It localises to the cytoplasm. Functionally, reduces the stability of FtsZ polymers in the presence of ATP. This is Cell division protein ZapE from Escherichia coli O157:H7.